The chain runs to 162 residues: UPF0305 protein MmarC6_0221 (162 aa).

Belongs to the UPF0305 family.

In Methanococcus maripaludis (strain C6 / ATCC BAA-1332), this protein is UPF0305 protein MmarC6_0221.